The sequence spans 257 residues: Thioesterase frbE (257 aa).

This sequence belongs to the AMT4 thioesterase family.

It participates in antifungal biosynthesis. Its function is as follows. Thioesterase; part of the gene cluster that mediates the biosynthesis of the antifungal antibiotic FR901469, an inhibitor of beta-1,3-glucansynthase, exerting antifungal activity against the pathogenes Candida albicans and Aspergillus fumigatus. FR901469 is a cyclic depsipeptide containing 12 amino acid residues and a fatty acid chain. The NRPS frbI contains 12 modules responsible for the formation of the depsipeptide backbone which is denoted as Acyl-Thr-Ala-Tyr-Val-4OHPro-Thr-Thr-3OHPro-threo3OHGln-Gly-Thr-Orn-OH (C71H116N14O23). The PKS frbB is probably involved in the production of the hydrocarbon chain, and the acyl-CoA ligase frbC might be involved in the transport of the chain to the peptide ptoduct of frbI. Because FR901469 contains 3 hydroxylated amino acid residues, the 3 oxygenases frbA, frbH, and frbJ might be participating in amino acid hydroxylation. As no thioesterase domains were detected in frbI or frbB, the thioesterases frbD and frbE may instead release and cyclize the products of the NRPS and PKS, respectively. The protein is Thioesterase frbE of Dothideomycetidae sp. (strain 11243) (Fungal sp. (strain No.11243)).